The sequence spans 117 residues: Large ribosomal subunit protein uL18 (117 aa).

Belongs to the universal ribosomal protein uL18 family. As to quaternary structure, part of the 50S ribosomal subunit; part of the 5S rRNA/L5/L18/L25 subcomplex. Contacts the 5S and 23S rRNAs.

This is one of the proteins that bind and probably mediate the attachment of the 5S RNA into the large ribosomal subunit, where it forms part of the central protuberance. This chain is Large ribosomal subunit protein uL18, found in Pseudoalteromonas atlantica (strain T6c / ATCC BAA-1087).